A 749-amino-acid polypeptide reads, in one-letter code: MDVRAALQCFFSALSGRFTGKKLGLEIYSIQYKMSNSGGSSPFLESPGGSPDVGSTNGQSNRQIQALQFKLNTLQNEYEIEKLQLQKQTNILEKKYKATIDELEKALNDTKYLYESNDKLEQELKSLKERSANSMNDKDKCIEELRTTLQNKDLEMETLRQQYDSKLSKVTNQCDHFKLEAESSHSLLMKYEKEIKRQSVDIKDLQHQVMEKDDELSSVKASKMINSHPNYSTEEFNELTEMNKMIQDQVQYTKELELANMQQANELKKLKQSQDTSTFWKLENEKLQNKLSQLHVLESQYENLQLENIDLKSKLTKWEIYNDSDDDDDNNVNNNDNNNNNKNDNNNDNNNDTSNNNNINNNNRTKNNIRNNPEEIIRDWKLTKKECLILTDMNDKLRLDNNNLKLLNDEMALERNQILDLNKNYENNIVNLKRLNHELEQQKSLSFEECRLLREQLDGLYSAQNNALLEVENSETHASNKNVNEDMNNLIDTYKNKTEDLTNELKKLNDQLLSNSNDVETQRKKRKLTSDQIGLNYSQRLNELQLENVSVSRELSKAQTTIQLLQEKLEKLTKLKEKKIRILQLRDGPFIKDQFIKKNKLLLLEKENADLLNELKKNNPAVETVPISVYDSLNFELKQFEQEVFKSNKRFSRLKQVFNNKSLEFIDVVNSLLGFKLEFQQDSRVKIFSCFKPEKYLIADLNENTLKSNLDADIEGWDDLMNLWVEDRGQLPCFLATITLRLWEQRQAK.

2 disordered regions span residues Gly-39–Gln-59 and Asp-323–Arg-370. Positions Asn-57–Ser-324 form a coiled coil. Residues Asn-331 to Arg-370 show a composition bias toward low complexity. Residues Leu-390–Gln-656 adopt a coiled-coil conformation. Thr-502 carries the post-translational modification Phosphothreonine.

It belongs to the MAD1 family. As to quaternary structure, forms a stable heteromer with MAD2 throughout the cell cycle. Part of complex consisting of MAD1, BUB1 and BUB3 after activation of spindle checkpoint. Becomes hyperphosphorylated when wild-type cells are arrested in mitosis. Phosphorylated by MPS1.

It localises to the nucleus. Its function is as follows. Central component of the spindle assembly checkpoint. Thought to recruit MAD2 to unattached kinetochores. During checkpoint activity, MAD2 is relayed from the MAD1-MAD2 complex to the mitotic checkpoint complex (MCC). The formation of a MAD1-BUB1-BUB3 complex seems to be required for the spindle checkpoint mechanism. This chain is Spindle assembly checkpoint component MAD1 (MAD1), found in Saccharomyces cerevisiae (strain ATCC 204508 / S288c) (Baker's yeast).